Reading from the N-terminus, the 309-residue chain is Protein FdhE homolog (309 aa).

This sequence belongs to the FdhE family.

It is found in the cytoplasm. Necessary for formate dehydrogenase activity. This chain is Protein FdhE homolog, found in Serratia proteamaculans (strain 568).